We begin with the raw amino-acid sequence, 200 residues long: Guanylyl cyclase-activating protein 2 (200 aa).

Gly-2 carries N-myristoyl glycine lipidation. EF-hand domains are found at residues Gly-14 to Glu-31, Glu-53 to Gly-88, Thr-89 to Leu-124, and Thr-141 to Val-176. The Ca(2+) site is built by Asp-66, Asn-68, Asp-70, Thr-72, Glu-77, Asp-102, Asp-104, Asn-106, Cys-108, Glu-113, Asp-154, Asn-156, Asp-158, Gln-160, and Glu-165.

In terms of processing, the N-terminus is blocked. In the retina, it is expressed in cone and rod photoreceptor cells.

The protein resides in the cell membrane. It is found in the photoreceptor inner segment. Its subcellular location is the cell projection. The protein localises to the cilium. It localises to the photoreceptor outer segment. Its function is as follows. Stimulates two retinal guanylyl cyclases (GCs) GUCY2D and GUCY2F when free calcium ions concentration is low, and inhibits GUCY2D and GUCY2F when free calcium ions concentration is elevated. This Ca(2+)-sensitive regulation of GCs is a key event in recovery of the dark state of rod photoreceptors following light exposure. May be involved in cone photoreceptor response and recovery of response in bright light. In Homo sapiens (Human), this protein is Guanylyl cyclase-activating protein 2 (GUCA1B).